A 1022-amino-acid chain; its full sequence is Protein translocase subunit SecA (1022 aa).

ATP is bound by residues glutamine 143, 161–165 (GEGKT), and aspartate 661. The tract at residues 973–1001 (AGSILSHESDVPSGTAAQQPIKADVKPGR) is disordered. Residues cysteine 1005, cysteine 1007, cysteine 1016, and histidine 1017 each contribute to the Zn(2+) site.

The protein belongs to the SecA family. Monomer and homodimer. Part of the essential Sec protein translocation apparatus which comprises SecA, SecYEG and auxiliary proteins SecDF. Other proteins may also be involved. Requires Zn(2+) as cofactor.

The protein localises to the cell inner membrane. The protein resides in the cytoplasm. It catalyses the reaction ATP + H2O + cellular proteinSide 1 = ADP + phosphate + cellular proteinSide 2.. In terms of biological role, part of the Sec protein translocase complex. Interacts with the SecYEG preprotein conducting channel. Has a central role in coupling the hydrolysis of ATP to the transfer of proteins into and across the cell membrane, serving as an ATP-driven molecular motor driving the stepwise translocation of polypeptide chains across the membrane. In Chlorobium phaeobacteroides (strain DSM 266 / SMG 266 / 2430), this protein is Protein translocase subunit SecA.